Reading from the N-terminus, the 1301-residue chain is ABC transporter BEA3 (1301 aa).

Residues 1–30 (MGKRTAENSAANGEGEEKHPEIGVDGRPEK) form a disordered region. A compositionally biased stretch (basic and acidic residues) spans 15 to 30 (GEEKHPEIGVDGRPEK). Transmembrane regions (helical) follow at residues 54–74 (VGVIASIGVGITLPLLNIVFG), 103–123 (LYLLGLFLGRLVLGYITNFAF), 177–197 (LGVFVEYNATMIASIIVAFIY), and 203–223 (LVTFTAVVFITFSVSLVLPYI). In terms of domain architecture, ABC transmembrane type-1 1 spans 54–345 (VGVIASIGVG…ISTPLLAVSK (292 aa)). Residue asparagine 229 is glycosylated (N-linked (GlcNAc...) asparagine). Transmembrane regions (helical) follow at residues 281-301 (FIALQYGLVFFSSYAAFGLAF) and 313-333 (INQLGAIIVVLFSVMMIVTAM). The ABC transporter 1 domain occupies 378-667 (IILEDVTFAY…EAGLYYNLVN (290 aa)). 413-420 (GPSGSGKS) is a binding site for ATP. The span at 442-454 (VEKPTDKKNNGGK) shows a compositional bias: basic and acidic residues. The segment at 442–461 (VEKPTDKKNNGGKEEDEQEL) is disordered. 2 N-linked (GlcNAc...) asparagine glycosylation sites follow: asparagine 511 and asparagine 618. The interval 682-708 (VIAKEERPSSVHEKAHTESTIEEKPLE) is disordered. The region spanning 735–1024 (ALTLFFSACA…ALSFGPNVAQ (290 aa)) is the ABC transmembrane type-1 2 domain. The next 6 helical transmembrane spans lie at 745–765 (GAAVPFQAWLFAKVIIVFGYL), 779–799 (SLMWTVLAISAGLAYCATFFL), 858–878 (SVFIALWTLMGTIAIALAFAW), 880–900 (LALVSLCVVVPILLAAGYWRM), 961–981 (WVSLLYAFSDSATIGCQAIVL), and 987–1007 (LLLSGEYDLESFFVCFMSVLN). The ABC transporter 2 domain maps to 1060–1296 (IELENIYFKY…RGVYWQMCQS (237 aa)). 1094-1101 (GASGSGKS) is a binding site for ATP.

It belongs to the ABC transporter superfamily. ABCB family. Multidrug resistance exporter (TC 3.A.1.201) subfamily.

The protein resides in the cell membrane. Its function is as follows. ABC transporter; part of the gene cluster that mediates the biosynthesis of beauvericin (BEA), a non-ribosomal cyclic hexadepsipeptide that shows antibiotic, antifungal, insecticidal, and cancer cell antiproliferative and antihaptotactic activity. Functions as a regulator of beauvericin production, rather than in BEA transport out of the cell. Beauvericin has low toxicity to the producing fungus and BEA3 does not play a role in detoxification and self-protection of the producing fungus. The sequence is that of ABC transporter BEA3 from Gibberella fujikuroi (strain CBS 195.34 / IMI 58289 / NRRL A-6831) (Bakanae and foot rot disease fungus).